The sequence spans 344 residues: Beta-1,4-galactosyltransferase 4 (344 aa).

At 1 to 12 the chain is on the cytoplasmic side; sequence MGCNPPYHLSYR. A helical; Signal-anchor for type II membrane protein transmembrane segment spans residues 13 to 38; sequence LRLLLLFTLCLTVVGWATSNYFVGAI. The Lumenal segment spans residues 39-344; it reads QVIPKAKDFM…NITVDFWTAA (306 aa). A disulfide bond links C77 and C118. UDP-alpha-D-galactose-binding positions include 129-133, 168-170, and 195-196; these read PHRNR, FNR, and VD. An intrachain disulfide couples C189 to C208. D196 serves as a coordination point for Mn(2+). N-linked (GlcNAc...) asparagine glycosylation occurs at N220. UDP-alpha-D-galactose contacts are provided by Y224 and W256. 258-261 is a binding site for N-acetyl-D-glucosamine; sequence GEDD. Position 289 (H289) interacts with Mn(2+). 289 to 291 contributes to the UDP-alpha-D-galactose binding site; the sequence is HTR. N-acetyl-D-glucosamine is bound at residue R301. Residue N335 is glycosylated (N-linked (GlcNAc...) asparagine).

It belongs to the glycosyltransferase 7 family. In terms of assembly, interacts with SLC35A2/UGT1. It depends on Mn(2+) as a cofactor.

It localises to the golgi apparatus membrane. The protein resides in the secreted. It carries out the reaction N-acetyl-D-glucosamine + UDP-alpha-D-galactose = beta-D-galactosyl-(1-&gt;4)-N-acetyl-D-glucosamine + UDP + H(+). The catalysed reaction is a beta-D-GlcNAc-(1-&gt;3)-beta-D-Gal-(1-&gt;4)-beta-D-Glc-(1&lt;-&gt;1)-Cer(d18:1(4E)) + UDP-alpha-D-galactose = a neolactoside nLc4Cer(d18:1(4E)) + UDP + H(+). It catalyses the reaction 3-O-{beta-D-galactosyl-(1-&gt;3)-[6-O-sulfo-N-acetyl-beta-D-glucosaminyl-(1-&gt;6)]-N-acetyl-alpha-D-galactosaminyl}-L-seryl-[protein] + UDP-alpha-D-galactose = 3-O-{beta-D-galactosyl-(1-&gt;3)-[beta-D-galactosyl-(1-&gt;4)-6-O-sulfo-N-acetyl-beta-D-glucosaminyl-(1-&gt;6)]-N-acetyl-alpha-D-galactosaminyl}-L-seryl-[protein] + UDP + H(+). The enzyme catalyses 3-O-{beta-D-galactosyl-(1-&gt;3)-[6-O-sulfo-N-acetyl-beta-D-glucosaminyl-(1-&gt;6)]-N-acetyl-alpha-D-galactosaminyl}-L-threonyl-[protein] + UDP-alpha-D-galactose = 3-O-{beta-D-galactosyl-(1-&gt;3)-[beta-D-galactosyl-(1-&gt;4)-6-O-sulfo-N-acetyl-beta-D-glucosaminyl-(1-&gt;6)]-N-acetyl-alpha-D-galactosaminyl}-L-threonyl-[protein] + UDP + H(+). The protein operates within protein modification; protein glycosylation. It participates in glycolipid biosynthesis. Functionally, galactose (Gal) transferase involved in the synthesis of terminal N-acetyllactosamine (LacNac) unit present on glycan chains of glycoproteins and glycosphingolipids. Catalyzes the transfer of Gal residue via a beta1-&gt;4 linkage from UDP-Gal to the non-reducing terminal N-acetyl glucosamine 6-O-sulfate (6-O-sulfoGlcNAc) in the linearly growing chain of both N- and O-linked keratan sulfate proteoglycans. Cooperates with B3GNT7 N-acetyl glucosamine transferase and CHST6 and CHST1 sulfotransferases to construct and elongate mono- and disulfated disaccharide units [-&gt;3Galbeta1-&gt;4(6-sulfoGlcNAcbeta)1-&gt;] and [-&gt;3(6-sulfoGalbeta)1-&gt;4(6-sulfoGlcNAcbeta)1-&gt;] within keratan sulfate polymer. Transfers Gal residue via a beta1-&gt;4 linkage to terminal 6-O-sulfoGlcNAc within the LacNac unit of core 2 O-glycans forming 6-sulfo-sialyl-Lewis X (sLex). May contribute to the generation of sLex epitope on mucin-type glycoproteins that serve as ligands for SELL/L-selectin, a major regulator of leukocyte migration. In the biosynthesis pathway of neolacto-series glycosphingolipids, transfers Gal residue via a beta1-&gt;4 linkage to terminal GlcNAc of a lactotriaosylceramide (Lc3Cer) acceptor to form a neolactotetraosylceramide. The polypeptide is Beta-1,4-galactosyltransferase 4 (Mus musculus (Mouse)).